We begin with the raw amino-acid sequence, 78 residues long: uncharacterized protein (78 aa).

Residues 56–66 show a composition bias toward basic and acidic residues; that stretch reads ERANAGKRVSE. The disordered stretch occupies residues 56–78; that stretch reads ERANAGKRVSEEEQINGKRKRKD.

This is an uncharacterized protein from Saccharomyces cerevisiae (strain ATCC 204508 / S288c) (Baker's yeast).